Consider the following 322-residue polypeptide: Peptidase 1 (322 aa).

The N-terminal stretch at 1-18 (MKFVLAIASLLVLSVVYA) is a signal peptide. Residues 19–99 (YPSEIRTFEE…LKKEFDLDAG (81 aa)) constitute a propeptide that is removed on maturation. An intrachain disulfide couples cysteine 131 to cysteine 171. The active site involves cysteine 134. Asparagine 152 is a glycosylation site (N-linked (GlcNAc...) asparagine). Active-site residues include histidine 270 and asparagine 290.

This sequence belongs to the peptidase C1 family. As to expression, expressed in the gut.

Its subcellular location is the secreted. The enzyme catalyses Broad endopeptidase specificity.. Functionally, probable thiol protease. The protein is Peptidase 1 of Psoroptes ovis (Sheep scab mite).